The following is a 263-amino-acid chain: Small ribosomal subunit protein eS4 (263 aa).

In terms of domain architecture, S4 RNA-binding spans 42–104 (LPLIVFLRNR…TGEHFRLVYD (63 aa)).

The protein belongs to the eukaryotic ribosomal protein eS4 family.

This chain is Small ribosomal subunit protein eS4 (RPS4Y1), found in Pan paniscus (Pygmy chimpanzee).